The sequence spans 304 residues: tRNA pseudouridine synthase B (304 aa).

Aspartate 40 acts as the Nucleophile in catalysis.

This sequence belongs to the pseudouridine synthase TruB family. Type 1 subfamily.

It catalyses the reaction uridine(55) in tRNA = pseudouridine(55) in tRNA. Its function is as follows. Responsible for synthesis of pseudouridine from uracil-55 in the psi GC loop of transfer RNAs. This chain is tRNA pseudouridine synthase B, found in Halalkalibacterium halodurans (strain ATCC BAA-125 / DSM 18197 / FERM 7344 / JCM 9153 / C-125) (Bacillus halodurans).